Reading from the N-terminus, the 588-residue chain is L-fucose isomerase (588 aa).

Catalysis depends on proton acceptor residues Glu335 and Asp359. Mn(2+)-binding residues include Glu335, Asp359, and His525.

It belongs to the L-fucose isomerase family. Requires Mn(2+) as cofactor.

It is found in the cytoplasm. The enzyme catalyses L-fucose = L-fuculose. The protein operates within carbohydrate degradation; L-fucose degradation; L-lactaldehyde and glycerone phosphate from L-fucose: step 1/3. Its function is as follows. Converts the aldose L-fucose into the corresponding ketose L-fuculose. The sequence is that of L-fucose isomerase from Streptococcus pneumoniae (strain Hungary19A-6).